Reading from the N-terminus, the 270-residue chain is Formamidopyrimidine-DNA glycosylase (270 aa).

The active-site Schiff-base intermediate with DNA is the P2. The Proton donor role is filled by E3. K58 (proton donor; for beta-elimination activity) is an active-site residue. Residues H90, R109, and R152 each contribute to the DNA site. An FPG-type zinc finger spans residues 237–270 (RVYGREGEPCQCGGVVKRIVQGGRSTFFCPRCQK). Residue R260 is the Proton donor; for delta-elimination activity of the active site.

The protein belongs to the FPG family. In terms of assembly, monomer. Zn(2+) serves as cofactor.

The catalysed reaction is Hydrolysis of DNA containing ring-opened 7-methylguanine residues, releasing 2,6-diamino-4-hydroxy-5-(N-methyl)formamidopyrimidine.. The enzyme catalyses 2'-deoxyribonucleotide-(2'-deoxyribose 5'-phosphate)-2'-deoxyribonucleotide-DNA = a 3'-end 2'-deoxyribonucleotide-(2,3-dehydro-2,3-deoxyribose 5'-phosphate)-DNA + a 5'-end 5'-phospho-2'-deoxyribonucleoside-DNA + H(+). In terms of biological role, involved in base excision repair of DNA damaged by oxidation or by mutagenic agents. Acts as a DNA glycosylase that recognizes and removes damaged bases. Has a preference for oxidized purines, such as 7,8-dihydro-8-oxoguanine (8-oxoG). Has AP (apurinic/apyrimidinic) lyase activity and introduces nicks in the DNA strand. Cleaves the DNA backbone by beta-delta elimination to generate a single-strand break at the site of the removed base with both 3'- and 5'-phosphates. This chain is Formamidopyrimidine-DNA glycosylase, found in Novosphingobium aromaticivorans (strain ATCC 700278 / DSM 12444 / CCUG 56034 / CIP 105152 / NBRC 16084 / F199).